A 100-amino-acid polypeptide reads, in one-letter code: Small ribosomal subunit protein uS14c (100 aa).

The protein belongs to the universal ribosomal protein uS14 family. In terms of assembly, part of the 30S ribosomal subunit.

It localises to the plastid. It is found in the chloroplast. In terms of biological role, binds 16S rRNA, required for the assembly of 30S particles. The sequence is that of Small ribosomal subunit protein uS14c from Tupiella akineta (Green alga).